A 352-amino-acid polypeptide reads, in one-letter code: Membrane progestin receptor alpha (352 aa).

Topologically, residues 1 to 75 are cytoplasmic; that stretch reads MATVVMEQIG…FLTLFQRHNE (75 aa). Residues 76–96 traverse the membrane as a helical segment; that stretch reads TLNVWTHLLAAFIILVKWQEI. The Extracellular segment spans residues 97–110; that stretch reads SETVDFLRDPHAQP. Residues 111–131 form a helical membrane-spanning segment; that stretch reads LFIVLLAAFTYLSFSALAHLL. Residues 132 to 139 lie on the Cytoplasmic side of the membrane; the sequence is SAKSELSY. The helical transmembrane segment at 140–160 threads the bilayer; that stretch reads YTFYFLDYVGVAVYQYGSALA. Residues 161 to 175 are Extracellular-facing; the sequence is HYYYAIEKEWHTKVQ. Residues 176 to 196 traverse the membrane as a helical segment; it reads GLFLPAAAFLAWLTCFGCCYG. The Cytoplasmic segment spans residues 197-242; it reads KYASPELPKVANKLFQVVPSALAYCLDISPVVHRIYSCYQEGCSDP. The helical transmembrane segment at 243-263 threads the bilayer; it reads VVAYHFYHVVFFLIGAYFFCC. Residues 264-275 lie on the Extracellular side of the membrane; sequence PHPESLFPGKCD. Residues 276-296 traverse the membrane as a helical segment; sequence FIGQGHQLFHVFVVVCTLTQV. Residues 297–316 lie on the Cytoplasmic side of the membrane; the sequence is EALRTDFTERRPFYERLHGD. Residues 317-337 form a helical membrane-spanning segment; it reads LAHDAVALFIFTACCSALTAF. The Extracellular segment spans residues 338–352; the sequence is YVRQRVRASLHEKGE.

It belongs to the ADIPOR family. Strongly expressed in ovary and brain; lower expression in testis and pituitary. Not detected in heart, kidney, spleen, intestine, gill and muscle.

The protein localises to the cell membrane. Its function is as follows. Steroid membrane receptor. Binds progesterone, progestin and 17-hydroxyprogesterone in vitro. Capable of mediating progestin-induced oocyte maturation. The protein is Membrane progestin receptor alpha (mpra) of Cynoscion nebulosus (Spotted seatrout).